The primary structure comprises 449 residues: 23S rRNA (uracil(1939)-C(5))-methyltransferase RlmD (449 aa).

One can recognise a TRAM domain in the interval 12–70; that stretch reads SKQLSAKQSFSVHQLDHLGAGIAQHQGKVVFIPGALPSETVQAQLTEQKKNYARAKLIK. Positions 83, 89, 92, and 170 each coordinate [4Fe-4S] cluster. S-adenosyl-L-methionine is bound by residues Gln-282, Phe-311, Asn-316, Glu-332, Asp-359, and Asp-379. Cys-405 functions as the Nucleophile in the catalytic mechanism.

The protein belongs to the class I-like SAM-binding methyltransferase superfamily. RNA M5U methyltransferase family. RlmD subfamily.

It catalyses the reaction uridine(1939) in 23S rRNA + S-adenosyl-L-methionine = 5-methyluridine(1939) in 23S rRNA + S-adenosyl-L-homocysteine + H(+). In terms of biological role, catalyzes the formation of 5-methyl-uridine at position 1939 (m5U1939) in 23S rRNA. This is 23S rRNA (uracil(1939)-C(5))-methyltransferase RlmD from Shewanella sp. (strain MR-4).